The sequence spans 472 residues: MAQANFGVVGMAVMGKNLALNVESRGYTVAIYNRTTSKTEEVYKEHQDKNLVLTKTLEEFVGSLEKPRRIMLMVQAGAATDATIKSLLPLLDKGDILIDGGNTHFPDTMRRNAELADSGINFIGTGVSGGEKGALLGPSMMPGGQKEAYDLVAPIFEQIAAKAPQDGKPCVAYMGANGAGHYVKMVHNGIEYGDMQLIAESYDLLKRVLGLSNAEIQAIFEEWNEGELDSYLIEITKEVLKRKDDEGEGYIVDKILDKAGNKGTGKWTSESALDLGVPLPLITESVFARYISTYKDERVKASKVLSGPAVNFSGDKKEVIEKIRKALYFSKIMSYAQGFAQLRKASEEFDWDLPYGTIAQIWRAGCIIRAEFLQNITDAFDKDSELENLLLDDYFVDITKRYQEAVRDVVSLAVQAGIPIPTFTSAISYYDSYRSENLPANLIQAQRDYFGAHTYERTDKAGIFHYDWYTED.

Residues 10 to 15, 33 to 35, 74 to 76, and Asn102 contribute to the NADP(+) site; these read GMAVMG, NRT, and VQA. Substrate is bound by residues Asn102 and 128-130; that span reads SGG. Lys184 functions as the Proton acceptor in the catalytic mechanism. Substrate is bound at residue 187 to 188; it reads HN. The active-site Proton donor is Glu191. Substrate-binding residues include Tyr192, Lys262, Arg289, Arg447, and His453.

The protein belongs to the 6-phosphogluconate dehydrogenase family. In terms of assembly, homodimer.

The enzyme catalyses 6-phospho-D-gluconate + NADP(+) = D-ribulose 5-phosphate + CO2 + NADPH. It participates in carbohydrate degradation; pentose phosphate pathway; D-ribulose 5-phosphate from D-glucose 6-phosphate (oxidative stage): step 3/3. Its function is as follows. Catalyzes the oxidative decarboxylation of 6-phosphogluconate to ribulose 5-phosphate and CO(2), with concomitant reduction of NADP to NADPH. This is 6-phosphogluconate dehydrogenase, decarboxylating (gnd) from Lactococcus lactis subsp. lactis (strain IL1403) (Streptococcus lactis).